The primary structure comprises 193 residues: dCTP deaminase (193 aa).

DCTP contacts are provided by residues 110–115, Asp128, 136–138, Tyr171, Lys178, and Gln182; these read RSSLAR and VLE. Glu138 functions as the Proton donor/acceptor in the catalytic mechanism. A disordered region spans residues 174–193; sequence RKSAKYKDQQEAVASRISQD.

This sequence belongs to the dCTP deaminase family. As to quaternary structure, homotrimer.

It catalyses the reaction dCTP + H2O + H(+) = dUTP + NH4(+). Its pathway is pyrimidine metabolism; dUMP biosynthesis; dUMP from dCTP (dUTP route): step 1/2. In terms of biological role, catalyzes the deamination of dCTP to dUTP. The protein is dCTP deaminase of Shewanella baltica (strain OS223).